The sequence spans 229 residues: Deoxyribose-phosphate aldolase (229 aa).

Aspartate 84 serves as the catalytic Proton donor/acceptor. Lysine 146 (schiff-base intermediate with acetaldehyde) is an active-site residue. Catalysis depends on lysine 188, which acts as the Proton donor/acceptor.

It belongs to the DeoC/FbaB aldolase family. DeoC type 1 subfamily.

The protein localises to the cytoplasm. It carries out the reaction 2-deoxy-D-ribose 5-phosphate = D-glyceraldehyde 3-phosphate + acetaldehyde. It functions in the pathway carbohydrate degradation; 2-deoxy-D-ribose 1-phosphate degradation; D-glyceraldehyde 3-phosphate and acetaldehyde from 2-deoxy-alpha-D-ribose 1-phosphate: step 2/2. Its function is as follows. Catalyzes a reversible aldol reaction between acetaldehyde and D-glyceraldehyde 3-phosphate to generate 2-deoxy-D-ribose 5-phosphate. The protein is Deoxyribose-phosphate aldolase of Pyrobaculum neutrophilum (strain DSM 2338 / JCM 9278 / NBRC 100436 / V24Sta) (Thermoproteus neutrophilus).